Reading from the N-terminus, the 732-residue chain is MVRSGNKAAVVLCMDVGFTMSNSIPGIESPFEQAKKVITMFVQRQVFAENKDEIALVLFGTDGTDNPLSGGDQYQNITVHRHLMLPDFDLLEDIESKIQPGSQQADFLDALIVSMDVIQHETIGKKFEKRHIEIFTDLSSRFSKSQLDIIIHSLKKCDISLQFFLPFSLGKEDGSGDRGDGPFRLGGHGPSFPLKGITEQQKEGLEIVKMVMISLEGEDGLDEIYSFSESLRKLCVFKKIERHSIHWPCRLTIGSNLSIRIAAYKSILQERVKKTWTVVDAKTLKKEDIQKETVYCLNDDDETEVLKEDIIQGFRYGSDIVPFSKVDEEQMKYKSEGKCFSVLGFCKSSQVQRRFFMGNQVLKVFAARDDEAAAVALSSLIHALDDLDMVAIVRYAYDKRANPQVGVAFPHIKHNYECLVYVQLPFMEDLRQYMFSSLKNSKKYAPTEAQLNAVDALIDSMSLAKKDEKTDTLEDLFPTTKIPNPRFQRLFQCLLHRALHPREPLPPIQQHIWNMLNPPAEVTTKSQIPLSKIKTLFPLIEAKKKDQVTAQEIFQDNHEDGPTAKKLKTEQGGAHFSVSSLAEGSVTSVGSVNPAENFRVLVKQKKASFEEASNQLINHIEQFLDTNETPYFMKSIDCIRAFREEAIKFSEEQRFNNFLKALQEKVEIKQLNHFWEIVVQDGITLITKEEASGSSVTAEEAKKFLAPKDKPSGDTAAVFEEGGDVDDLLDMI.

The 223-residue stretch at 9–231 (AVVLCMDVGF…DEIYSFSESL (223 aa)) folds into the VWFA domain. The segment at 138 to 165 (LSSRFSKSQLDIIIHSLKKCDISLQFFL) is leucine-zipper. Lys144 carries the post-translational modification N6-acetyllysine. Lys195 participates in a covalent cross-link: Glycyl lysine isopeptide (Lys-Gly) (interchain with G-Cter in SUMO2). A Ku domain is found at 253-452 (IGSNLSIRIA…KYAPTEAQLN (200 aa)). Ser255 and Ser258 each carry phosphoserine. Lys265 carries the post-translational modification N6-acetyllysine. Phosphoserine is present on Ser318. Position 332 is an N6-acetyllysine (Lys332). Residues Lys532 and Lys534 each participate in a glycyl lysine isopeptide (Lys-Gly) (interchain with G-Cter in SUMO2) cross-link. Thr535 bears the Phosphothreonine mark. Glycyl lysine isopeptide (Lys-Gly) (interchain with G-Cter in SUMO2) cross-links involve residues Lys566 and Lys568. Residues Ser577, Ser579, and Ser580 each carry the phosphoserine; by PRKDC modification. N6-acetyllysine is present on residues Lys660 and Lys665. Residues Lys669 and Lys688 each participate in a glycyl lysine isopeptide (Lys-Gly) (interchain with G-Cter in SUMO2) cross-link. Phosphothreonine; by PRKDC is present on Thr715. The EEXXXDL motif motif lies at 720–728 (EEGGDVDDL).

The protein belongs to the ku80 family. Heterodimer composed of XRCC5/Ku80 and XRCC6/Ku70; heterodimerization stabilizes XRCC5 protein. Component of the core long-range non-homologous end joining (NHEJ) complex (also named DNA-PK complex) composed of PRKDC, LIG4, XRCC4, XRCC6/Ku70, XRCC5/Ku86 and NHEJ1/XLF. Additional component of the NHEJ complex includes PAXX. Following autophosphorylation, PRKDC dissociates from DNA, leading to formation of the short-range NHEJ complex, composed of LIG4, XRCC4, XRCC6/Ku70, XRCC5/Ku86 and NHEJ1/XLF. The XRCC5-XRCC6 dimer also associates with NAA15, and this complex displays DNA binding activity towards the osteocalcin FGF response element (OCFRE). In addition, XRCC5 binds to the osteoblast-specific transcription factors MSX2 and RUNX2. Interacts with ELF3. Interacts with APLF (via KBM motif). The XRCC5/XRCC6 dimer associates in a DNA-dependent manner with APEX1. Identified in a complex with DEAF1 and XRCC6. Interacts with NR4A3; the DNA-dependent protein kinase complex DNA-PK phosphorylates and activates NR4A3 and prevents NR4A3 ubiquitinylation and degradation. Interacts with RNF138. Interacts with CYREN isoform 1 (CYREN-1) and isoform 4 (CYREN-2) (via KBM motif). Interacts with WRN (via KBM motif). Interacts (via N-terminus) with HSF1 (via N-terminus); this interaction is direct and prevents XRCC5/XRCC6 heterodimeric binding and non-homologous end joining (NHEJ) repair activities induced by ionizing radiation (IR). Interacts with DHX9; this interaction occurs in a RNA-dependent manner. Part of the HDP-RNP complex composed of at least HEXIM1, PRKDC, XRCC5, XRCC6, paraspeckle proteins (SFPQ, NONO, PSPC1, RBM14, and MATR3) and NEAT1 RNA. Interacts with ERCC6. The XRCC5-XRCC6 dimer associates with ALKBH2. Interacts with TPRN; TPRN interacts with a number of DNA damage response proteins, is recruited to sites of DNA damage and may play a role in DNA damage repair. Interacts with ERCC6L2. As to quaternary structure, (Microbial infection) Interacts with human T-cell leukemia virus 1/HTLV-1 protein HBZ. ADP-ribosylated by PARP3. Post-translationally, phosphorylated on serine residues. Phosphorylation by PRKDC may enhance helicase activity. In terms of processing, sumoylated. Ubiquitinated by RNF8 via 'Lys-48'-linked ubiquitination following DNA damage, leading to its degradation and removal from DNA damage sites. Ubiquitinated by RNF138, leading to remove the Ku complex from DNA breaks.

The protein localises to the nucleus. It is found in the nucleolus. It localises to the chromosome. In terms of biological role, single-stranded DNA-dependent ATP-dependent helicase that plays a key role in DNA non-homologous end joining (NHEJ) by recruiting DNA-PK to DNA. Required for double-strand break repair and V(D)J recombination. Also has a role in chromosome translocation. The DNA helicase II complex binds preferentially to fork-like ends of double-stranded DNA in a cell cycle-dependent manner. It works in the 3'-5' direction. During NHEJ, the XRCC5-XRRC6 dimer performs the recognition step: it recognizes and binds to the broken ends of the DNA and protects them from further resection. Binding to DNA may be mediated by XRCC6. The XRCC5-XRRC6 dimer acts as a regulatory subunit of the DNA-dependent protein kinase complex DNA-PK by increasing the affinity of the catalytic subunit PRKDC to DNA by 100-fold. The XRCC5-XRRC6 dimer is probably involved in stabilizing broken DNA ends and bringing them together. The assembly of the DNA-PK complex to DNA ends is required for the NHEJ ligation step. The XRCC5-XRRC6 dimer probably also acts as a 5'-deoxyribose-5-phosphate lyase (5'-dRP lyase), by catalyzing the beta-elimination of the 5' deoxyribose-5-phosphate at an abasic site near double-strand breaks. XRCC5 probably acts as the catalytic subunit of 5'-dRP activity, and allows to 'clean' the termini of abasic sites, a class of nucleotide damage commonly associated with strand breaks, before such broken ends can be joined. The XRCC5-XRRC6 dimer together with APEX1 acts as a negative regulator of transcription. In association with NAA15, the XRCC5-XRRC6 dimer binds to the osteocalcin promoter and activates osteocalcin expression. As part of the DNA-PK complex, involved in the early steps of ribosome assembly by promoting the processing of precursor rRNA into mature 18S rRNA in the small-subunit processome. Binding to U3 small nucleolar RNA, recruits PRKDC and XRCC5/Ku86 to the small-subunit processome. Plays a role in the regulation of DNA virus-mediated innate immune response by assembling into the HDP-RNP complex, a complex that serves as a platform for IRF3 phosphorylation and subsequent innate immune response activation through the cGAS-STING pathway. The protein is X-ray repair cross-complementing protein 5 (XRCC5) of Homo sapiens (Human).